The chain runs to 424 residues: Formyl-CoA:oxalate CoA-transferase (424 aa).

CoA contacts are provided by residues 17-18, Arg-38, 96-98, Arg-104, and 136-139; these read QS, NFA, and KVYE. Residue Asp-168 is the Nucleophile of the active site. 247-249 serves as a coordination point for substrate; the sequence is GGQ.

This sequence belongs to the CoA-transferase III family. Frc subfamily. Homodimer.

The catalysed reaction is formyl-CoA + oxalate = oxalyl-CoA + formate. The protein operates within metabolic intermediate degradation; oxalate degradation; CO(2) and formate from oxalate: step 1/2. Its function is as follows. Involved in the catabolism of oxalate and in the adapatation to low pH via the induction of the oxalate-dependent acid tolerance response (ATR). Catalyzes the transfer of the CoA moiety from formyl-CoA to oxalate. The sequence is that of Formyl-CoA:oxalate CoA-transferase from Afipia carboxidovorans (strain ATCC 49405 / DSM 1227 / KCTC 32145 / OM5) (Oligotropha carboxidovorans).